The sequence spans 51 residues: Large ribosomal subunit protein bL33 (51 aa).

This sequence belongs to the bacterial ribosomal protein bL33 family.

This is Large ribosomal subunit protein bL33 from Pseudoalteromonas atlantica (strain T6c / ATCC BAA-1087).